A 117-amino-acid polypeptide reads, in one-letter code: DNA polymerase epsilon subunit 4 (117 aa).

Residues 1–36 (MAAAAAAGSGTPREEEGPAGEAAASQPQAPTSVPGA) form a disordered region. Position 2 is an N-acetylalanine (Ala2). Residue Thr11 is modified to Phosphothreonine. Over residues 19-30 (AGEAAASQPQAP) the composition is skewed to low complexity. Ser25 is modified (phosphoserine).

As to quaternary structure, component of the DNA polymerase epsilon complex consisting of four subunits: the catalytic subunit POLE and the accessory subunits POLE2, POLE3 and POLE4. Interaction with POLE3 is a prerequisite for further binding with POLE and POLE2.

It localises to the nucleus. Its function is as follows. Accessory component of the DNA polymerase epsilon complex. Participates in DNA repair and in chromosomal DNA replication. The polypeptide is DNA polymerase epsilon subunit 4 (POLE4) (Homo sapiens (Human)).